The sequence spans 282 residues: Stress response regulator protein 1 (282 aa).

Low complexity-rich tracts occupy residues 12–30 and 45–58; these read NLSR…HSST and NSQS…SNNN. Disordered stretches follow at residues 12 to 31, 43 to 84, and 112 to 139; these read NLSR…SSTV, DINS…DDED, and LTPF…TTVV. The segment covering 66 to 77 has biased composition (polar residues); that stretch reads SDYNSYTHNQYY. The span at 125–139 shows a compositional bias: low complexity; that stretch reads SIISSKSSNKSTTVV. In terms of domain architecture, Response regulatory spans 155 to 273; it reads SFLIVDDNII…LDFMANSIDD (119 aa). Asp206 is subject to 4-aspartylphosphate.

Required for stress adaptation, morphogenesis and virulence. This is Stress response regulator protein 1 (SRR1) from Candida albicans (strain SC5314 / ATCC MYA-2876) (Yeast).